The sequence spans 518 residues: ATP synthase subunit alpha (518 aa).

169–176 (GDRKTGKT) serves as a coordination point for ATP.

It belongs to the ATPase alpha/beta chains family. F-type ATPases have 2 components, CF(1) - the catalytic core - and CF(0) - the membrane proton channel. CF(1) has five subunits: alpha(3), beta(3), gamma(1), delta(1), epsilon(1). CF(0) has three main subunits: a(1), b(2) and c(9-12). The alpha and beta chains form an alternating ring which encloses part of the gamma chain. CF(1) is attached to CF(0) by a central stalk formed by the gamma and epsilon chains, while a peripheral stalk is formed by the delta and b chains.

It localises to the cell membrane. The enzyme catalyses ATP + H2O + 4 H(+)(in) = ADP + phosphate + 5 H(+)(out). Its function is as follows. Produces ATP from ADP in the presence of a proton gradient across the membrane. The alpha chain is a regulatory subunit. This chain is ATP synthase subunit alpha, found in Enterococcus hirae (strain ATCC 9790 / DSM 20160 / JCM 8729 / LMG 6399 / NBRC 3181 / NCIMB 6459 / NCDO 1258 / NCTC 12367 / WDCM 00089 / R).